The chain runs to 263 residues: Acyl-[acyl-carrier-protein]--UDP-N-acetylglucosamine O-acyltransferase (263 aa).

This sequence belongs to the transferase hexapeptide repeat family. LpxA subfamily. As to quaternary structure, homotrimer.

It localises to the cytoplasm. The catalysed reaction is a (3R)-hydroxyacyl-[ACP] + UDP-N-acetyl-alpha-D-glucosamine = a UDP-3-O-[(3R)-3-hydroxyacyl]-N-acetyl-alpha-D-glucosamine + holo-[ACP]. Its pathway is glycolipid biosynthesis; lipid IV(A) biosynthesis; lipid IV(A) from (3R)-3-hydroxytetradecanoyl-[acyl-carrier-protein] and UDP-N-acetyl-alpha-D-glucosamine: step 1/6. Involved in the biosynthesis of lipid A, a phosphorylated glycolipid that anchors the lipopolysaccharide to the outer membrane of the cell. This is Acyl-[acyl-carrier-protein]--UDP-N-acetylglucosamine O-acyltransferase from Campylobacter lari (strain RM2100 / D67 / ATCC BAA-1060).